We begin with the raw amino-acid sequence, 344 residues long: NDP-polyphosphate phosphotransferase 2 (344 aa).

A disordered region spans residues 1–60 (METAKPIAPQKDSKANGVDATDPVVKVASPQDPAGDAKVEDATAPVAEVEPRTPRNRRLP).

This sequence belongs to the polyphosphate kinase 2 (PPK2) family. Class I subfamily. It depends on Mg(2+) as a cofactor.

The catalysed reaction is [phosphate](n) + ATP = [phosphate](n+1) + ADP. It catalyses the reaction [phosphate](n) + CTP = [phosphate](n+1) + CDP. It carries out the reaction [phosphate](n) + GTP = [phosphate](n+1) + GDP. The enzyme catalyses [phosphate](n) + UTP = [phosphate](n+1) + UDP. In terms of biological role, uses inorganic polyphosphate (polyP) as a donor to convert NDP to NTP. PolyP hydrolysis is slightly faster with ADP, but it can also use GDP, CDP and UDP. The protein is NDP-polyphosphate phosphotransferase 2 of Ruegeria pomeroyi (strain ATCC 700808 / DSM 15171 / DSS-3) (Silicibacter pomeroyi).